The sequence spans 259 residues: MKRISLIALVTIMSGCTMLEPIETPEVVNATTVVDAVEGDKSKDESSGIVDTLRGRSDPVAGDPAWAPIHPKQQPEHYAAETGSLFSVNHLSNLYDDSKPRGVGDIITVTLDEKTNASKSANADLSKSNDSSMDPLEVGGQELKIDGKYNFSYNLTNSNNFTGDASAKQSNSISGYITVEVIEVLANGNLVIRGEKWLTLNTGDEYIRLSGTIRPDDISFDNTIASNRVSNARIQYSGTGTQQDMQEPGFLARFFNVSL.

A signal peptide spans 1–15; sequence MKRISLIALVTIMSG. The N-palmitoyl cysteine moiety is linked to residue C16. C16 is lipidated: S-diacylglycerol cysteine.

Belongs to the FlgH family. As to quaternary structure, the basal body constitutes a major portion of the flagellar organelle and consists of four rings (L,P,S, and M) mounted on a central rod.

The protein resides in the cell outer membrane. It is found in the bacterial flagellum basal body. Its function is as follows. Assembles around the rod to form the L-ring and probably protects the motor/basal body from shearing forces during rotation. In Vibrio vulnificus (strain CMCP6), this protein is Flagellar L-ring protein.